A 1010-amino-acid chain; its full sequence is 2-oxoglutarate dehydrogenase-like, mitochondrial (1010 aa).

Residues 1–73 (MSQLRLLPSR…RSVHKSWDSF (73 aa)) constitute a mitochondrion transit peptide. The Ca(2+) site is built by H130, D143, and D145. Thiamine diphosphate contacts are provided by R299, D398, N431, I433, and Q663. Mg(2+)-binding residues include D398, N431, and I433.

It belongs to the alpha-ketoglutarate dehydrogenase family. As to quaternary structure, the OGDHC complex comprises multiple copies of three catalytic enzyme components, the 2-oxoglutarate dehydrogenase (OGDH/E1), the dihydrolipoamide dehydrogenase (DLST/E2) and the dihydrolipoamide dehydrogenase (DLD/E3). OGDHL/E1-like isoenzyme may replace OGDH in the OGDHC complex in the brain. The presence of either ODGH/E1 or ODGHL/E1-like isoenzyme in the complex may depend on its tissular distribution. Thiamine diphosphate is required as a cofactor. The cofactor is Mg(2+).

The protein localises to the mitochondrion matrix. The catalysed reaction is N(6)-[(R)-lipoyl]-L-lysyl-[protein] + 2-oxoglutarate + H(+) = N(6)-[(R)-S(8)-succinyldihydrolipoyl]-L-lysyl-[protein] + CO2. 2-oxoglutarate dehydrogenase (E1-like) component of the 2-oxoglutarate dehydrogenase multienzyme complex (OGDHC) which mediates the decarboxylation of alpha-ketoglutarate in the tricarboxylic acid cycle. The OGDHC complex catalyzes the overall conversion of 2-oxoglutarate to succinyl-CoA and CO(2) while reducing NAD(+) to NADH. The OGDHC complex is mainly active in the mitochondrion. Involved in the inhibition of cell proliferation and in apoptosis. The polypeptide is 2-oxoglutarate dehydrogenase-like, mitochondrial (OGDHL) (Pongo abelii (Sumatran orangutan)).